The primary structure comprises 88 residues: Small ribosomal subunit protein uS17 (88 aa).

It belongs to the universal ribosomal protein uS17 family. As to quaternary structure, part of the 30S ribosomal subunit.

One of the primary rRNA binding proteins, it binds specifically to the 5'-end of 16S ribosomal RNA. The sequence is that of Small ribosomal subunit protein uS17 from Yersinia pseudotuberculosis serotype O:1b (strain IP 31758).